The primary structure comprises 189 residues: Effector protein NleF (189 aa).

Residues 186-189 (LQCG) are interaction with host caspases.

As to quaternary structure, monomer. Interacts (via C-terminus) with human CASP4, CASP8 and CASP9.

The protein resides in the secreted. It localises to the host cytoplasm. Functionally, effector protein that alters host cell physiology and promotes bacterial survival in host tissues. Inhibits the catalytic activity of human CASP4, CASP8 and CASP9, and thereby inhibits apoptosis of infected host cells. The protein is Effector protein NleF (nleF) of Escherichia coli O157:H7.